We begin with the raw amino-acid sequence, 109 residues long: MDDSIDEEVISGGSTITVEFSGGAETLFGGVKEHIVPLDGSKIVLLEEMLRWLRDHLLTGDAGLFLQENTVRPGILVMINDTDWDLMGETEYILQPGDHILFISTLHGG.

Position 109 is a 1-thioglycine (Gly-109). Residue Gly-109 forms a Glycyl lysine isopeptide (Gly-Lys) (interchain with K-? in acceptor proteins) linkage.

It belongs to the URM1 family. Post-translationally, C-terminal thiocarboxylation occurs in 2 steps, it is first acyl-adenylated (-COAMP) via the hesA/moeB/thiF part of the MOCS3 homolog, then thiocarboxylated (-COSH) via the rhodanese domain of the MOCS3 homolog.

Its subcellular location is the cytoplasm. The protein operates within tRNA modification; 5-methoxycarbonylmethyl-2-thiouridine-tRNA biosynthesis. Acts as a sulfur carrier required for 2-thiolation of mcm(5)S(2)U at tRNA wobble positions of cytosolic tRNA(Lys), tRNA(Glu) and tRNA(Gln). Serves as sulfur donor in tRNA 2-thiolation reaction by being thiocarboxylated (-COSH) at its C-terminus by MOCS3. The sulfur is then transferred to tRNA to form 2-thiolation of mcm(5)S(2)U. Also acts as a ubiquitin-like protein (UBL) that is covalently conjugated via an isopeptide bond to lysine residues of target proteins. The thiocarboxylated form serves as substrate for conjugation and oxidative stress specifically induces the formation of UBL-protein conjugates. The sequence is that of Ubiquitin-related modifier 1 homolog from Anopheles gambiae (African malaria mosquito).